A 263-amino-acid chain; its full sequence is 2-dehydro-3-deoxyphosphooctonate aldolase (263 aa).

The protein belongs to the KdsA family.

It is found in the cytoplasm. It carries out the reaction D-arabinose 5-phosphate + phosphoenolpyruvate + H2O = 3-deoxy-alpha-D-manno-2-octulosonate-8-phosphate + phosphate. It functions in the pathway carbohydrate biosynthesis; 3-deoxy-D-manno-octulosonate biosynthesis; 3-deoxy-D-manno-octulosonate from D-ribulose 5-phosphate: step 2/3. It participates in bacterial outer membrane biogenesis; lipopolysaccharide biosynthesis. In Wolinella succinogenes (strain ATCC 29543 / DSM 1740 / CCUG 13145 / JCM 31913 / LMG 7466 / NCTC 11488 / FDC 602W) (Vibrio succinogenes), this protein is 2-dehydro-3-deoxyphosphooctonate aldolase.